Here is a 347-residue protein sequence, read N- to C-terminus: Phosphate acyltransferase (347 aa).

Belongs to the PlsX family. As to quaternary structure, homodimer. Probably interacts with PlsY.

The protein resides in the cytoplasm. It catalyses the reaction a fatty acyl-[ACP] + phosphate = an acyl phosphate + holo-[ACP]. Its pathway is lipid metabolism; phospholipid metabolism. Catalyzes the reversible formation of acyl-phosphate (acyl-PO(4)) from acyl-[acyl-carrier-protein] (acyl-ACP). This enzyme utilizes acyl-ACP as fatty acyl donor, but not acyl-CoA. This is Phosphate acyltransferase from Rhizobium meliloti (strain 1021) (Ensifer meliloti).